The following is a 250-amino-acid chain: NAD(P)H-quinone oxidoreductase subunit K (250 aa).

[4Fe-4S] cluster contacts are provided by Cys-60, Cys-61, Cys-125, and Cys-156. Residues 230 to 250 (ELNTSEIDASPASQPSSTYES) form a disordered region. Residues 231–250 (LNTSEIDASPASQPSSTYES) are compositionally biased toward polar residues.

The protein belongs to the complex I 20 kDa subunit family. In terms of assembly, NDH-1 can be composed of about 15 different subunits; different subcomplexes with different compositions have been identified which probably have different functions. It depends on [4Fe-4S] cluster as a cofactor.

The protein resides in the cellular thylakoid membrane. The catalysed reaction is a plastoquinone + NADH + (n+1) H(+)(in) = a plastoquinol + NAD(+) + n H(+)(out). The enzyme catalyses a plastoquinone + NADPH + (n+1) H(+)(in) = a plastoquinol + NADP(+) + n H(+)(out). Its function is as follows. NDH-1 shuttles electrons from an unknown electron donor, via FMN and iron-sulfur (Fe-S) centers, to quinones in the respiratory and/or the photosynthetic chain. The immediate electron acceptor for the enzyme in this species is believed to be plastoquinone. Couples the redox reaction to proton translocation, and thus conserves the redox energy in a proton gradient. Cyanobacterial NDH-1 also plays a role in inorganic carbon-concentration. This is NAD(P)H-quinone oxidoreductase subunit K from Prochlorococcus marinus (strain MIT 9303).